A 68-amino-acid polypeptide reads, in one-letter code: Protein SlyX homolog (68 aa).

This sequence belongs to the SlyX family.

This is Protein SlyX homolog from Brucella suis (strain ATCC 23445 / NCTC 10510).